Here is a 474-residue protein sequence, read N- to C-terminus: tRNA-2-methylthio-N(6)-dimethylallyladenosine synthase (474 aa).

One can recognise an MTTase N-terminal domain in the interval 3–120; the sequence is KKLLIKTWGC…LPEMIKQSQS (118 aa). [4Fe-4S] cluster contacts are provided by Cys-12, Cys-49, Cys-83, Cys-157, Cys-161, and Cys-164. Positions 143 to 375 constitute a Radical SAM core domain; it reads RAEGATAFVS…QQQINAQAMR (233 aa). The TRAM domain maps to 378–441; it reads RLMLGTEQRV…ANSLRGEIVR (64 aa).

This sequence belongs to the methylthiotransferase family. MiaB subfamily. In terms of assembly, monomer. It depends on [4Fe-4S] cluster as a cofactor.

Its subcellular location is the cytoplasm. It catalyses the reaction N(6)-dimethylallyladenosine(37) in tRNA + (sulfur carrier)-SH + AH2 + 2 S-adenosyl-L-methionine = 2-methylsulfanyl-N(6)-dimethylallyladenosine(37) in tRNA + (sulfur carrier)-H + 5'-deoxyadenosine + L-methionine + A + S-adenosyl-L-homocysteine + 2 H(+). Catalyzes the methylthiolation of N6-(dimethylallyl)adenosine (i(6)A), leading to the formation of 2-methylthio-N6-(dimethylallyl)adenosine (ms(2)i(6)A) at position 37 in tRNAs that read codons beginning with uridine. The chain is tRNA-2-methylthio-N(6)-dimethylallyladenosine synthase from Vibrio vulnificus (strain YJ016).